Consider the following 2375-residue polypeptide: CCR4-NOT transcription complex subunit 1 (2375 aa).

Short sequence motifs (LXXLL) lie at residues 153–157 (LPDLL), 181–185 (LHLLL), and 223–227 (LAPLL). Residue serine 318 is modified to Phosphoserine. The LXXLL motif lies at 570–574 (LSMLL). Residues 725 to 770 (SAAPHTQSMQGFPPNLGSAFSTPQSPAKAFPPLSTPNQTTAFSGIG) are disordered. Residues 799 to 1014 (NNDPFVQRKL…QGSITTPGSI (216 aa)) are interaction with ZFP36. Serine 1060 bears the Phosphoserine mark. Positions 1089-1604 (EPPENIQEKI…AQPMKQAWAT (516 aa)) are interaction with CNOT6, CNOT6L, CNOT7 and CNOT8. A compositionally biased stretch (basic and acidic residues) spans 1314–1326 (QLSAPKKDVKQPE). The tract at residues 1314–1351 (QLSAPKKDVKQPEELPAITTTTTSTTPATSTTCTATVP) is disordered. Positions 1332–1349 (TTTTTSTTPATSTTCTAT) are enriched in low complexity. 3 short sequence motifs (LXXLL) span residues 1638–1642 (LRSLL), 1941–1945 (LIALL), and 2095–2099 (LRVLL).

This sequence belongs to the CNOT1 family. In terms of assembly, component of the CCR4-NOT complex; distinct complexes seem to exist that differ in the participation of probably mutually exclusive catalytic subunits. In the complex, interacts directly with CNOT6, CNOT6L, CNOT7 or CNOT8. Interacts in a ligand-dependent fashion with ESR1 and RXRA. Interacts with NANOS2, TOB1 and ZFP36. Interacts with TNRC6A, TNRC6B or TNRC6C; the interactions are direct. Interacts with YTHDF2; the interaction is direct and promotes recruitment of the CCR4-NOT complex to N6-methyladenosine (m6A)-containing mRNAs, leading to their deadenylation and subsequent degradation. Interacts with EIF4ENIF1/4E-T. Interacts in an RNA-independent manner with BICC1 (via KH domains). Interacts with TEX13A; the interaction may inhibit CNOT1 binding to mRNA and subsequently CNOT1-mediated mRNA degradation.

Its subcellular location is the cytoplasm. It localises to the P-body. The protein resides in the nucleus. Its function is as follows. Scaffolding component of the CCR4-NOT complex which is one of the major cellular mRNA deadenylases and is linked to various cellular processes including bulk mRNA degradation, miRNA-mediated repression, translational repression during translational initiation and general transcription regulation. Additional complex functions may be a consequence of its influence on mRNA expression. Its scaffolding function implies its interaction with the catalytic complex module and diverse RNA-binding proteins mediating the complex recruitment to selected mRNA 3'UTRs. Involved in degradation of AU-rich element (ARE)-containing mRNAs probably via association with ZFP36. Mediates the recruitment of the CCR4-NOT complex to miRNA targets and to the RISC complex via association with TNRC6A, TNRC6B or TNRC6C. Acts as a transcriptional repressor. Represses the ligand-dependent transcriptional activation by nuclear receptors. Involved in the maintenance of embryonic stem (ES) cell identity; prevents their differentiation towards extraembryonic trophectoderm lineages. Plays a role in rapid sperm motility via mediating timely mRNA turnover. In Mus musculus (Mouse), this protein is CCR4-NOT transcription complex subunit 1 (Cnot1).